We begin with the raw amino-acid sequence, 150 residues long: Ribonuclease pancreatic delta-type (150 aa).

The first 25 residues, 1–25 (MGLEKSLILFSLLVLVLGWVQPSLG), serve as a signal peptide directing secretion. Position 35 (arginine 35) interacts with substrate. Histidine 37 (proton acceptor) is an active-site residue. 4 disulfide bridges follow: cysteine 51/cysteine 110, cysteine 65/cysteine 121, cysteine 83/cysteine 136, and cysteine 90/cysteine 98. Residues 66-70 (KRVNT), lysine 91, and arginine 111 each bind substrate. The active-site Proton donor is the histidine 145.

It belongs to the pancreatic ribonuclease family. As to quaternary structure, monomer.

Its subcellular location is the secreted. The enzyme catalyses an [RNA] containing cytidine + H2O = an [RNA]-3'-cytidine-3'-phosphate + a 5'-hydroxy-ribonucleotide-3'-[RNA].. It carries out the reaction an [RNA] containing uridine + H2O = an [RNA]-3'-uridine-3'-phosphate + a 5'-hydroxy-ribonucleotide-3'-[RNA].. Functionally, endonuclease that catalyzes the cleavage of RNA on the 3' side of pyrimidine nucleotides. Acts on single-stranded and double-stranded RNA. The sequence is that of Ribonuclease pancreatic delta-type from Rattus exulans (Polynesian rat).